The sequence spans 374 residues: Ribosomal RNA large subunit methyltransferase G (374 aa).

It belongs to the methyltransferase superfamily. RlmG family.

It localises to the cytoplasm. It carries out the reaction guanosine(1835) in 23S rRNA + S-adenosyl-L-methionine = N(2)-methylguanosine(1835) in 23S rRNA + S-adenosyl-L-homocysteine + H(+). In terms of biological role, specifically methylates the guanine in position 1835 (m2G1835) of 23S rRNA. In Pseudomonas putida (strain ATCC 47054 / DSM 6125 / CFBP 8728 / NCIMB 11950 / KT2440), this protein is Ribosomal RNA large subunit methyltransferase G.